Consider the following 248-residue polypeptide: Probable uridine-cytidine kinase (248 aa).

ATP is bound at residue 15-23 (GGTSCGKST). Substrate-binding residues include D73, Y101, R154, R164, and Q172. D201 lines the ATP pocket. The tract at residues 224-248 (SDEEEEKENELVKQGSFRRPFSRPH) is disordered.

Belongs to the uridine kinase family.

It carries out the reaction uridine + ATP = UMP + ADP + H(+). The enzyme catalyses cytidine + ATP = CMP + ADP + H(+). It functions in the pathway pyrimidine metabolism; CTP biosynthesis via salvage pathway; CTP from cytidine: step 1/3. Its pathway is pyrimidine metabolism; UMP biosynthesis via salvage pathway; UMP from uridine: step 1/1. The sequence is that of Probable uridine-cytidine kinase from Caenorhabditis elegans.